Consider the following 344-residue polypeptide: tRNA N6-adenosine threonylcarbamoyltransferase (344 aa).

2 residues coordinate Fe cation: His-111 and His-115. Residues 134–138 (LVSGG), Asp-167, Gly-180, Asp-184, and Asn-277 contribute to the substrate site. Asp-305 provides a ligand contact to Fe cation.

The protein belongs to the KAE1 / TsaD family. Fe(2+) is required as a cofactor.

Its subcellular location is the cytoplasm. The catalysed reaction is L-threonylcarbamoyladenylate + adenosine(37) in tRNA = N(6)-L-threonylcarbamoyladenosine(37) in tRNA + AMP + H(+). Its function is as follows. Required for the formation of a threonylcarbamoyl group on adenosine at position 37 (t(6)A37) in tRNAs that read codons beginning with adenine. Is involved in the transfer of the threonylcarbamoyl moiety of threonylcarbamoyl-AMP (TC-AMP) to the N6 group of A37, together with TsaE and TsaB. TsaD likely plays a direct catalytic role in this reaction. In Microcystis aeruginosa (strain NIES-843 / IAM M-2473), this protein is tRNA N6-adenosine threonylcarbamoyltransferase.